Reading from the N-terminus, the 434-residue chain is MSESVGRTSAMHRLQVVLGHLAGRPESSSALQAAPCSATFPQASASDVVVVHGRRTPIGRAGRGGFKDTTPDELLSAVLTAVLQDVKLKPECLGDISVGNVLEPGAGAVMARIAQFLSGIPETVPLSAVNRQCSSGLQAVANIAGGIRNGSYDIGMACGVESMSLSNRGNPGNISSRLLESDKARDCLIPMGITSENVAERFGISRQKQDAFALASQQKAASAQSKGCFRAEIVPVTTTVLDDKGDRKTITVSQDEGVRPSTTMEGLAKLKPAFKDGGSTTAGNSSQVSDGAAAVLLARRSKAEELGLPILGVLRSYAVVGVPPDIMGIGPAYAIPAALQKAGLTVNDIDIFEINEAFASQALYCVEKLGIPAEKVNPLGGAIALGHPLGCTGARQVVTLLNELKRRGRRAYGVVSMCIGTGMGAAAVFEYPGN.

Residues 1–36 (MSESVGRTSAMHRLQVVLGHLAGRPESSSALQAAPC) constitute a peroxisome transit peptide. The PTS2-type peroxisomal targeting signal stretch occupies residues 11 to 36 (MHRLQVVLGHLAGRPESSSALQAAPC). Cys-133 acts as the Acyl-thioester intermediate in catalysis. N6-acetyllysine is present on residues Lys-183 and Lys-244. Residues His-387 and Cys-418 each act as proton acceptor in the active site.

Belongs to the thiolase-like superfamily. Thiolase family. In terms of assembly, homodimer. Interacts (via PTS2-type peroxisomal targeting signal region) with PEX7; leading to its translocation into peroxisomes.

It localises to the peroxisome. The enzyme catalyses an acyl-CoA + acetyl-CoA = a 3-oxoacyl-CoA + CoA. It carries out the reaction 2 acetyl-CoA = acetoacetyl-CoA + CoA. The catalysed reaction is tetradecanoyl-CoA + acetyl-CoA = 3-oxohexadecanoyl-CoA + CoA. It catalyses the reaction hexanoyl-CoA + acetyl-CoA = 3-oxooctanoyl-CoA + CoA. The enzyme catalyses 3-oxohexadecanedioyl-CoA + CoA = tetradecanedioyl-CoA + acetyl-CoA. It carries out the reaction 3-oxo-(6Z,9Z,12Z,15Z,18Z,21Z)-tetracosahexaenoyl-CoA + CoA = (4Z,7Z,10Z,13Z,16Z,19Z)-docosahexaenoyl-CoA + acetyl-CoA. Its pathway is lipid metabolism; peroxisomal fatty acid beta-oxidation. Its function is as follows. Responsible for the thiolytic cleavage of straight chain 3-keto fatty acyl-CoAs (3-oxoacyl-CoAs). Plays an important role in fatty acid peroxisomal beta-oxidation. Catalyzes the cleavage of short, medium, long, and very long straight chain 3-oxoacyl-CoAs. Medium chain straight 3-oxoacyl-CoAs are preferred substrates. This is 3-ketoacyl-CoA thiolase A, peroxisomal from Rattus norvegicus (Rat).